A 230-amino-acid chain; its full sequence is Orotidine 5'-phosphate decarboxylase (230 aa).

Substrate-binding positions include Asp-10, Lys-31, 58-67 (DLKLHDIPNT), Thr-117, Arg-179, Gln-188, Gly-208, and Arg-209. The active-site Proton donor is the Lys-60. Positions 177–196 (GIRPKDASSDDQKRITTPED) are disordered. Positions 179–196 (RPKDASSDDQKRITTPED) are enriched in basic and acidic residues.

This sequence belongs to the OMP decarboxylase family. Type 1 subfamily. As to quaternary structure, homodimer.

It carries out the reaction orotidine 5'-phosphate + H(+) = UMP + CO2. The protein operates within pyrimidine metabolism; UMP biosynthesis via de novo pathway; UMP from orotate: step 2/2. Its function is as follows. Catalyzes the decarboxylation of orotidine 5'-monophosphate (OMP) to uridine 5'-monophosphate (UMP). This chain is Orotidine 5'-phosphate decarboxylase, found in Staphylococcus saprophyticus subsp. saprophyticus (strain ATCC 15305 / DSM 20229 / NCIMB 8711 / NCTC 7292 / S-41).